Here is a 204-residue protein sequence, read N- to C-terminus: Apoptosis regulator R11 (204 aa).

The BH1 signature appears at 101-120 (ELFRDGTNWGRIVAFFSFGR). Positions 152-167 (PWMQENGGWEAFVGLY) match the BH2 motif. A helical transmembrane segment spans residues 181–198 (RFGRLLTIVMLTGVFALV).

This sequence belongs to the Bcl-2 family.

Its subcellular location is the membrane. Its function is as follows. Confers strong protection against cell death. The protein is Apoptosis regulator R11 of Xenopus laevis (African clawed frog).